We begin with the raw amino-acid sequence, 565 residues long: uncharacterized protein (565 aa).

Positions 1-19 (MRWLATFVALLIAISSVSA) are cleaved as a signal peptide. Polar residues predominate over residues 494–504 (TGAENVTNNSV). The tract at residues 494–525 (TGAENVTNNSVTATTPPAKASQQTPAPATPPV) is disordered. Residues 505-519 (TATTPPAKASQQTPA) are compositionally biased toward low complexity.

This is an uncharacterized protein from Archaeoglobus fulgidus (strain ATCC 49558 / DSM 4304 / JCM 9628 / NBRC 100126 / VC-16).